The following is a 447-amino-acid chain: Elongation factor 1-alpha (447 aa).

The tr-type G domain occupies 5 to 230 (KIHISIVVIG…DQINEPKRPS (226 aa)). The tract at residues 14–21 (GHVDSGKS) is G1. 14–21 (GHVDSGKS) provides a ligand contact to GTP. Position 55 is an N6,N6-dimethyllysine (K55). Residues 70 to 74 (GITID) form a G2 region. K79 bears the N6,N6,N6-trimethyllysine mark. The segment at 91–94 (DAPG) is G3. Residues 91 to 95 (DAPGH) and 153 to 156 (NKMD) each bind GTP. A G4 region spans residues 153–156 (NKMD). K187 carries the post-translational modification N6,N6,N6-trimethyllysine. Residues 194–196 (SGF) form a G5 region. Position 261 is an N6-methyllysine (K261). At E289 the chain carries 5-glutamyl glycerylphosphorylethanolamine. N6,N6,N6-trimethyllysine is present on K306. E362 is subject to 5-glutamyl glycerylphosphorylethanolamine. An N6,N6,N6-trimethyllysine modification is found at K396.

The protein belongs to the TRAFAC class translation factor GTPase superfamily. Classic translation factor GTPase family. EF-Tu/EF-1A subfamily.

The protein localises to the cytoplasm. In terms of biological role, this protein promotes the GTP-dependent binding of aminoacyl-tRNA to the A-site of ribosomes during protein biosynthesis. This chain is Elongation factor 1-alpha (BLT63), found in Hordeum vulgare (Barley).